A 298-amino-acid polypeptide reads, in one-letter code: Thymidylate synthase (298 aa).

Residues arginine 25 and 159-160 each bind dUMP; that span reads RR. The active-site Nucleophile is the cysteine 179. DUMP contacts are provided by residues 200–203, asparagine 211, and 241–243; these read RSVD and HLY. Aspartate 203 contributes to the (6R)-5,10-methylene-5,6,7,8-tetrahydrofolate binding site. Alanine 297 is a binding site for (6R)-5,10-methylene-5,6,7,8-tetrahydrofolate.

The protein belongs to the thymidylate synthase family. Bacterial-type ThyA subfamily. Homodimer.

Its subcellular location is the cytoplasm. The enzyme catalyses dUMP + (6R)-5,10-methylene-5,6,7,8-tetrahydrofolate = 7,8-dihydrofolate + dTMP. Its pathway is pyrimidine metabolism; dTTP biosynthesis. Its function is as follows. Catalyzes the reductive methylation of 2'-deoxyuridine-5'-monophosphate (dUMP) to 2'-deoxythymidine-5'-monophosphate (dTMP) while utilizing 5,10-methylenetetrahydrofolate (mTHF) as the methyl donor and reductant in the reaction, yielding dihydrofolate (DHF) as a by-product. This enzymatic reaction provides an intracellular de novo source of dTMP, an essential precursor for DNA biosynthesis. This is Thymidylate synthase from Cereibacter sphaeroides (strain ATCC 17023 / DSM 158 / JCM 6121 / CCUG 31486 / LMG 2827 / NBRC 12203 / NCIMB 8253 / ATH 2.4.1.) (Rhodobacter sphaeroides).